A 309-amino-acid polypeptide reads, in one-letter code: ADP-L-glycero-D-manno-heptose-6-epimerase (309 aa).

NADP(+) is bound by residues 10 to 11, 31 to 32, lysine 38, lysine 53, 75 to 79, and asparagine 92; these read MI, DN, and EGACS. Tyrosine 139 (proton acceptor) is an active-site residue. Lysine 143 lines the NADP(+) pocket. Asparagine 168 is a substrate binding site. NADP(+) is bound by residues valine 169 and lysine 177. Catalysis depends on lysine 177, which acts as the Proton acceptor. Substrate is bound by residues serine 179, histidine 186, 200–203, arginine 208, and tyrosine 271; that span reads FDGS.

Belongs to the NAD(P)-dependent epimerase/dehydratase family. HldD subfamily. Homopentamer. It depends on NADP(+) as a cofactor.

The catalysed reaction is ADP-D-glycero-beta-D-manno-heptose = ADP-L-glycero-beta-D-manno-heptose. It participates in nucleotide-sugar biosynthesis; ADP-L-glycero-beta-D-manno-heptose biosynthesis; ADP-L-glycero-beta-D-manno-heptose from D-glycero-beta-D-manno-heptose 7-phosphate: step 4/4. Catalyzes the interconversion between ADP-D-glycero-beta-D-manno-heptose and ADP-L-glycero-beta-D-manno-heptose via an epimerization at carbon 6 of the heptose. This Serratia proteamaculans (strain 568) protein is ADP-L-glycero-D-manno-heptose-6-epimerase.